The primary structure comprises 211 residues: ATP-dependent Clp protease proteolytic subunit 2 (211 aa).

The active-site Nucleophile is the Ser106. His131 is an active-site residue.

The protein belongs to the peptidase S14 family. Fourteen ClpP subunits assemble into 2 heptameric rings which stack back to back to give a disk-like structure with a central cavity, resembling the structure of eukaryotic proteasomes.

Its subcellular location is the cytoplasm. It carries out the reaction Hydrolysis of proteins to small peptides in the presence of ATP and magnesium. alpha-casein is the usual test substrate. In the absence of ATP, only oligopeptides shorter than five residues are hydrolyzed (such as succinyl-Leu-Tyr-|-NHMec, and Leu-Tyr-Leu-|-Tyr-Trp, in which cleavage of the -Tyr-|-Leu- and -Tyr-|-Trp bonds also occurs).. Cleaves peptides in various proteins in a process that requires ATP hydrolysis. Has a chymotrypsin-like activity. Plays a major role in the degradation of misfolded proteins. This Bradyrhizobium diazoefficiens (strain JCM 10833 / BCRC 13528 / IAM 13628 / NBRC 14792 / USDA 110) protein is ATP-dependent Clp protease proteolytic subunit 2.